We begin with the raw amino-acid sequence, 162 residues long: Transcription elongation factor GreA (162 aa).

A coiled-coil region spans residues 46–77 (RENAEYKAAREEQTRLNNMVTRLQEEIERAQV).

Belongs to the GreA/GreB family.

Functionally, necessary for efficient RNA polymerase transcription elongation past template-encoded arresting sites. The arresting sites in DNA have the property of trapping a certain fraction of elongating RNA polymerases that pass through, resulting in locked ternary complexes. Cleavage of the nascent transcript by cleavage factors such as GreA or GreB allows the resumption of elongation from the new 3'terminus. GreA releases sequences of 2 to 3 nucleotides. The chain is Transcription elongation factor GreA from Treponema pallidum (strain Nichols).